Here is a 238-residue protein sequence, read N- to C-terminus: Ribonuclease 3 (238 aa).

In terms of domain architecture, RNase III spans 4–127 (IEEFEKRLGY…TMGAIYLETG (124 aa)). Glutamate 40 is a Mg(2+) binding site. The active site involves aspartate 44. Mg(2+)-binding residues include asparagine 113 and glutamate 116. The active site involves glutamate 116. Residues 154 to 223 (DYKTALQELT…ARIALEIFHR (70 aa)) form the DRBM domain.

This sequence belongs to the ribonuclease III family. Homodimer. Requires Mg(2+) as cofactor.

The protein resides in the cytoplasm. The catalysed reaction is Endonucleolytic cleavage to 5'-phosphomonoester.. Functionally, digests double-stranded RNA. Involved in the processing of primary rRNA transcript to yield the immediate precursors to the large and small rRNAs (23S and 16S). Processes some mRNAs, and tRNAs when they are encoded in the rRNA operon. Processes pre-crRNA and tracrRNA of type II CRISPR loci if present in the organism. The polypeptide is Ribonuclease 3 (Wolinella succinogenes (strain ATCC 29543 / DSM 1740 / CCUG 13145 / JCM 31913 / LMG 7466 / NCTC 11488 / FDC 602W) (Vibrio succinogenes)).